We begin with the raw amino-acid sequence, 194 residues long: Imidazoleglycerol-phosphate dehydratase (194 aa).

It belongs to the imidazoleglycerol-phosphate dehydratase family.

Its subcellular location is the cytoplasm. It catalyses the reaction D-erythro-1-(imidazol-4-yl)glycerol 3-phosphate = 3-(imidazol-4-yl)-2-oxopropyl phosphate + H2O. It functions in the pathway amino-acid biosynthesis; L-histidine biosynthesis; L-histidine from 5-phospho-alpha-D-ribose 1-diphosphate: step 6/9. The protein is Imidazoleglycerol-phosphate dehydratase of Lactiplantibacillus plantarum (strain ATCC BAA-793 / NCIMB 8826 / WCFS1) (Lactobacillus plantarum).